Consider the following 624-residue polypeptide: Phosphatidylinositol 4-kinase lsb6 (624 aa).

A compositionally biased stretch (polar residues) spans 1-31; it reads MESTFHSDTLDSFPNYQENSLNTNEEQTNPL. The interval 1–53 is disordered; sequence MESTFHSDTLDSFPNYQENSLNTNEEQTNPLESLRDGWASSNSSSSSSLLLPD. Positions 40–51 are enriched in low complexity; it reads SSNSSSSSSLLL. One can recognise a PI3K/PI4K catalytic domain in the interval 145–520; sequence GVFPVLISKG…LLELPNLYVV (376 aa). The tract at residues 151-157 is G-loop; that stretch reads ISKGSSG. Residues 346 to 354 are catalytic loop; that stretch reads RNTDRNLDN. The segment at 409-429 is activation loop; the sequence is AIDNSLAFPYKHPDSWRSFPY.

The protein belongs to the PI3/PI4-kinase family. The cofactor is Mg(2+). Mn(2+) is required as a cofactor.

Its subcellular location is the cell membrane. It localises to the vacuole membrane. The protein localises to the golgi apparatus membrane. The enzyme catalyses a 1,2-diacyl-sn-glycero-3-phospho-(1D-myo-inositol) + ATP = a 1,2-diacyl-sn-glycero-3-phospho-(1D-myo-inositol 4-phosphate) + ADP + H(+). Functionally, may play a role in endocytic and/or exocytic pathways. This Schizosaccharomyces pombe (strain 972 / ATCC 24843) (Fission yeast) protein is Phosphatidylinositol 4-kinase lsb6 (lsb6).